Reading from the N-terminus, the 352-residue chain is Phosphoribosylformylglycinamidine cyclo-ligase (352 aa).

It belongs to the AIR synthase family.

It localises to the cytoplasm. The catalysed reaction is 2-formamido-N(1)-(5-O-phospho-beta-D-ribosyl)acetamidine + ATP = 5-amino-1-(5-phospho-beta-D-ribosyl)imidazole + ADP + phosphate + H(+). It functions in the pathway purine metabolism; IMP biosynthesis via de novo pathway; 5-amino-1-(5-phospho-D-ribosyl)imidazole from N(2)-formyl-N(1)-(5-phospho-D-ribosyl)glycinamide: step 2/2. The polypeptide is Phosphoribosylformylglycinamidine cyclo-ligase (Pseudomonas syringae pv. tomato (strain ATCC BAA-871 / DC3000)).